We begin with the raw amino-acid sequence, 87 residues long: Defensin alpha-like protein 1 (87 aa).

Residues 1–19 (MKTLILLSALVLLALQVQA) form the signal peptide. A propeptide spanning residues 20 to 56 (DPIQEAEEETKTEEQPADEDQDVSVSFEGPEASAVQD) is cleaved from the precursor. Residues 23 to 41 (QEAEEETKTEEQPADEDQD) are compositionally biased toward acidic residues. Positions 23 to 43 (QEAEEETKTEEQPADEDQDVS) are disordered.

This sequence belongs to the alpha-defensin family. As to quaternary structure, antiparallel homodimer; disulfide-linked. In terms of tissue distribution, specifically expressed in small intestine (jejunum and ileum). Probably expressed by Paneth cells at the base of intestinal crypts. Coexpressed with MMP7 in small intestine.

It is found in the secreted. In terms of biological role, intestinal defense peptide. Has potent antibacterial activity against Gram-negative bacteria E.coli O157:H7, S.typhimurium DT104, and K.pneumoniae; and against Gram-positive bacteria S.aureus, methicillin-resistant S.aureus and L.monocytogenes. Remains active in the presence of NaCl and Mg(2+). Probably functions by disrupting bacterial membrane integrity. However, does not show cytotoxic activity towards human intestinal cells. The protein is Defensin alpha-like protein 1 of Rattus norvegicus (Rat).